A 424-amino-acid polypeptide reads, in one-letter code: Endochitinase 1 (424 aa).

The first 22 residues, 1–22 (MPSLFAQSLAIIATLQATLGLA), serve as a signal peptide directing secretion. A GH18 domain is found at 39–402 (YVNAVYFTNW…GTSSNKLGGP (364 aa)). N-linked (GlcNAc...) asparagine glycans are attached at residues N74, N78, and N96. Chitin is bound by residues 103–104 (GN) and 130–133 (GGWT). E172 (proton donor) is an active-site residue. Chitin is bound by residues Y173 and 238–241 (MAYD). N248 and N347 each carry an N-linked (GlcNAc...) asparagine glycan. W379 serves as a coordination point for chitin. The segment at 385-412 (RQGPDSLIGTSSNKLGGPDTTENLLNYP) is disordered. The span at 392–408 (IGTSSNKLGGPDTTENL) shows a compositional bias: polar residues.

It belongs to the glycosyl hydrolase 18 family. Chitinase class V subfamily.

The protein resides in the secreted. The catalysed reaction is Random endo-hydrolysis of N-acetyl-beta-D-glucosaminide (1-&gt;4)-beta-linkages in chitin and chitodextrins.. Secreted chitinase involved in the degradation of chitin, a component of the cell walls of fungi and exoskeletal elements of some animals (including worms and arthropods). Participates in the infection process and directly acts in the penetration process of the host cuticle. The protein is Endochitinase 1 (chit1) of Metarhizium robertsii (strain ARSEF 23 / ATCC MYA-3075) (Metarhizium anisopliae (strain ARSEF 23)).